A 142-amino-acid chain; its full sequence is Transcriptional regulator MraZ (142 aa).

2 SpoVT-AbrB domains span residues 5 to 51 (ASSL…PRPE) and 77 to 120 (AMDV…DKAT).

Belongs to the MraZ family. As to quaternary structure, forms oligomers.

The protein resides in the cytoplasm. It is found in the nucleoid. In Acidovorax ebreus (strain TPSY) (Diaphorobacter sp. (strain TPSY)), this protein is Transcriptional regulator MraZ.